The chain runs to 1129 residues: Kinesin-like protein KIP1 (1129 aa).

Residues methionine 1–glycine 49 are disordered. 2 stretches are compositionally biased toward polar residues: residues arginine 11–glutamine 21 and serine 28–glutamate 48. In terms of domain architecture, Kinesin motor spans asparagine 54 to isoleucine 417. Glycine 139–threonine 146 provides a ligand contact to ATP. Coiled-coil stretches lie at residues glutamine 422–valine 513, leucine 681–valine 765, and aspartate 919–asparagine 948.

It belongs to the TRAFAC class myosin-kinesin ATPase superfamily. Kinesin family. BimC subfamily.

Its subcellular location is the cytoplasm. It is found in the cytoskeleton. The protein localises to the spindle. Its function is as follows. Required for assembly of the mitotic spindle. Interacts with spindle microtubules to produce an outwardly directed force acting upon the poles. Following spindle assembly, CIN8 and KIP1 apparently act to oppose a force that draws separated poles back together. This force seems to be mediate by KAR3. This chain is Kinesin-like protein KIP1 (KIP1), found in Eremothecium gossypii (strain ATCC 10895 / CBS 109.51 / FGSC 9923 / NRRL Y-1056) (Yeast).